The chain runs to 320 residues: Probable L,D-transpeptidase YcfS (320 aa).

Residues 1–23 (MMIKTRFSRWLTFFTFAAAVALA) form the signal peptide. The LysM domain maps to 45–90 (KFHVVENDGGSLEAIAKKYNVGFLALLQANPGVDPYVPRAGSVLTI). A L,D-TPase catalytic domain is found at 102–241 (EGIVINIAEL…VTPGTKVNII (140 aa)). The active-site Proton donor/acceptor is the histidine 201. Cysteine 217 serves as the catalytic Nucleophile.

This sequence belongs to the YkuD family. Interacts with DsbG.

It localises to the periplasm. It functions in the pathway cell wall biogenesis; peptidoglycan biosynthesis. In terms of biological role, responsible, at least in part, for anchoring of the major outer membrane lipoprotein (Lpp, also known as the Braun lipoprotein) to the peptidoglycan via a meso-diaminopimelyl-L-Lys- bond on the terminal residue of Lpp. The protein is Probable L,D-transpeptidase YcfS (ycfS) of Escherichia coli (strain K12).